Consider the following 325-residue polypeptide: Protease HtpX homolog (325 aa).

A helical membrane pass occupies residues 20-40; the sequence is IGYLLGGGGGMMIALVIAVAM. Histidine 130 lines the Zn(2+) pocket. Glutamate 131 is an active-site residue. Position 134 (histidine 134) interacts with Zn(2+). A run of 2 helical transmembrane segments spans residues 145–165 and 173–193; these read IVAT…FLGG and VMGV…AMIV. Zn(2+) is bound at residue glutamate 202. Residues 288–325 are disordered; it reads AMTARAAAPSQNSGPWGQRSDNAGGNSNGGSRYRGPWS. Positions 306–325 are enriched in low complexity; that stretch reads RSDNAGGNSNGGSRYRGPWS.

The protein belongs to the peptidase M48B family. Requires Zn(2+) as cofactor.

The protein resides in the cell inner membrane. This chain is Protease HtpX homolog, found in Brucella suis (strain ATCC 23445 / NCTC 10510).